Reading from the N-terminus, the 232-residue chain is Ubiquinone biosynthesis O-methyltransferase (232 aa).

Residues Arg36, Gly55, Asp76, and Met120 each contribute to the S-adenosyl-L-methionine site.

Belongs to the methyltransferase superfamily. UbiG/COQ3 family.

The catalysed reaction is a 3-demethylubiquinol + S-adenosyl-L-methionine = a ubiquinol + S-adenosyl-L-homocysteine + H(+). The enzyme catalyses a 3-(all-trans-polyprenyl)benzene-1,2-diol + S-adenosyl-L-methionine = a 2-methoxy-6-(all-trans-polyprenyl)phenol + S-adenosyl-L-homocysteine + H(+). The protein operates within cofactor biosynthesis; ubiquinone biosynthesis. Functionally, O-methyltransferase that catalyzes the 2 O-methylation steps in the ubiquinone biosynthetic pathway. The protein is Ubiquinone biosynthesis O-methyltransferase of Burkholderia vietnamiensis (strain G4 / LMG 22486) (Burkholderia cepacia (strain R1808)).